Reading from the N-terminus, the 1442-residue chain is Sulfite reductase [NADPH] subunit beta (1442 aa).

The region spanning 682–831 is the Flavodoxin-like domain; that stretch reads LHVYYASDGG…AYSEWEPKLW (150 aa). S903 is modified (phosphoserine). C1300, C1306, C1345, and C1349 together coordinate [4Fe-4S] cluster. C1349 is a siroheme binding site.

The protein belongs to the nitrite and sulfite reductase 4Fe-4S domain family. Alpha(2)-beta(2). The alpha component is a flavoprotein, the beta component is a hemoprotein. Siroheme is required as a cofactor. [4Fe-4S] cluster serves as cofactor.

Its subcellular location is the cytoplasm. The catalysed reaction is hydrogen sulfide + 3 NADP(+) + 3 H2O = sulfite + 3 NADPH + 4 H(+). The protein operates within sulfur metabolism; hydrogen sulfide biosynthesis; hydrogen sulfide from sulfite (NADPH route): step 1/1. Catalyzes the reduction of sulfite to sulfide, one of several activities required for the biosynthesis of L-cysteine from sulfate. This chain is Sulfite reductase [NADPH] subunit beta (MET5), found in Saccharomyces cerevisiae (strain ATCC 204508 / S288c) (Baker's yeast).